The primary structure comprises 407 residues: Succinyl-diaminopimelate desuccinylase (407 aa).

Positions 1–10 (MSDIDNNLTS) are enriched in polar residues. The disordered stretch occupies residues 1-20 (MSDIDNNLTSQTHQQATHQQ). Over residues 11–20 (QTHQQATHQQ) the composition is skewed to low complexity. A Zn(2+)-binding site is contributed by H93. The active site involves D95. Zn(2+) is bound at residue D126. E160 acts as the Proton acceptor in catalysis. 3 residues coordinate Zn(2+): E161, E189, and H379.

This sequence belongs to the peptidase M20A family. DapE subfamily. Homodimer. The cofactor is Zn(2+). Co(2+) serves as cofactor.

It catalyses the reaction N-succinyl-(2S,6S)-2,6-diaminopimelate + H2O = (2S,6S)-2,6-diaminopimelate + succinate. It functions in the pathway amino-acid biosynthesis; L-lysine biosynthesis via DAP pathway; LL-2,6-diaminopimelate from (S)-tetrahydrodipicolinate (succinylase route): step 3/3. Catalyzes the hydrolysis of N-succinyl-L,L-diaminopimelic acid (SDAP), forming succinate and LL-2,6-diaminopimelate (DAP), an intermediate involved in the bacterial biosynthesis of lysine and meso-diaminopimelic acid, an essential component of bacterial cell walls. The protein is Succinyl-diaminopimelate desuccinylase of Psychrobacter arcticus (strain DSM 17307 / VKM B-2377 / 273-4).